The sequence spans 175 residues: Zinc finger protein ZAT18 (175 aa).

2 C2H2-type zinc fingers span residues 49-71 and 93-115; these read FECK…RASH and HKCT…MRKH. A Nuclear localization signal motif is present at residues 71-78; it reads HKKPKLIV. Residues 146–152 carry the EAR-like (transcriptional repression) motif; that stretch reads LDLNLTP.

In terms of tissue distribution, mostly expressed in stems, siliques and leaves, and, to a lower extent, in cotyledons, hypocotyls and roots.

The protein resides in the nucleus. Its function is as follows. Transcription factor involved in stress responses. Positive regulator of the jasmonic acid (JA)- mediated signaling pathway. Triggers the up-regulation of LOX3, VSP2, PAL1 and PAL2 in a JA-dependent manner. Promotes drought and osmotic stress tolerance by preventing reactive oxygen species (ROS) production (e.g. H(2)O(2)). The polypeptide is Zinc finger protein ZAT18 (Arabidopsis thaliana (Mouse-ear cress)).